We begin with the raw amino-acid sequence, 156 residues long: 6,7-dimethyl-8-ribityllumazine synthase (156 aa).

5-amino-6-(D-ribitylamino)uracil-binding positions include Phe22, 56 to 58 (AFE), and 80 to 82 (AVV). (2S)-2-hydroxy-3-oxobutyl phosphate is bound at residue 85–86 (ET). Residue His88 is the Proton donor of the active site. Residue Phe113 coordinates 5-amino-6-(D-ribitylamino)uracil. A (2S)-2-hydroxy-3-oxobutyl phosphate-binding site is contributed by Arg127.

The protein belongs to the DMRL synthase family.

It catalyses the reaction (2S)-2-hydroxy-3-oxobutyl phosphate + 5-amino-6-(D-ribitylamino)uracil = 6,7-dimethyl-8-(1-D-ribityl)lumazine + phosphate + 2 H2O + H(+). It functions in the pathway cofactor biosynthesis; riboflavin biosynthesis; riboflavin from 2-hydroxy-3-oxobutyl phosphate and 5-amino-6-(D-ribitylamino)uracil: step 1/2. In terms of biological role, catalyzes the formation of 6,7-dimethyl-8-ribityllumazine by condensation of 5-amino-6-(D-ribitylamino)uracil with 3,4-dihydroxy-2-butanone 4-phosphate. This is the penultimate step in the biosynthesis of riboflavin. This is 6,7-dimethyl-8-ribityllumazine synthase from Pediococcus pentosaceus (strain ATCC 25745 / CCUG 21536 / LMG 10740 / 183-1w).